The chain runs to 652 residues: Forkhead box protein O1-A (652 aa).

Disordered stretches follow at residues 1-57 (MADA…EPSS), 208-277 (SSWW…NSHS), and 359-406 (NLLS…QQTQ). A compositionally biased stretch (polar residues) spans 41–57 (DSNTSSPAPSVKQEPSS). Positions 134–228 (WGNMSYADLI…KSGKSPRRRA (95 aa)) form a DNA-binding region, fork-head. The segment covering 238 to 249 (AKSRGRAAKKKL) has biased composition (basic residues). Over residues 362–397 (SPKNPSTGGPGSGSNQSSPSSLMQASPGYSPYSSPG) the composition is skewed to low complexity.

It is found in the cytoplasm. The protein resides in the nucleus. Functionally, transcription factor that regulates metabolic homeostasis in response to oxidative stress. Binds to the consensus sequence 5'-TT[G/A]TTTTG-3' and the related Daf-16 family binding element (DBE) with consensus sequence 5'-TT[G/A]TTTAC-3'. Main regulator of redox balance and osteoblast numbers and controls bone mass. Orchestrates the endocrine function of the skeleton in regulating glucose metabolism. May be involved in regulating cellular homeostasis in the eye. May act as a positive regulator of apoptosis in cardiac smooth muscle cells as a result of its transcriptional activation of pro-apoptotic genes. The protein is Forkhead box protein O1-A (foxo1a) of Danio rerio (Zebrafish).